Reading from the N-terminus, the 332-residue chain is Arabinogalactan endo-beta-1,4-galactanase (332 aa).

N111 carries an N-linked (GlcNAc...) asparagine glycan. E135 functions as the Proton donor in the catalytic mechanism. E245 functions as the Nucleophile in the catalytic mechanism.

This sequence belongs to the glycosyl hydrolase 53 family.

The catalysed reaction is The enzyme specifically hydrolyzes (1-&gt;4)-beta-D-galactosidic linkages in type I arabinogalactans.. The polypeptide is Arabinogalactan endo-beta-1,4-galactanase (Humicola insolens (Soft-rot fungus)).